Consider the following 136-residue polypeptide: Large ribosomal subunit protein uL16 (136 aa).

This sequence belongs to the universal ribosomal protein uL16 family. In terms of assembly, part of the 50S ribosomal subunit.

In terms of biological role, binds 23S rRNA and is also seen to make contacts with the A and possibly P site tRNAs. The chain is Large ribosomal subunit protein uL16 from Ehrlichia canis (strain Jake).